We begin with the raw amino-acid sequence, 120 residues long: uncharacterized protein (120 aa).

A Nudix hydrolase domain is found at 29–120; it reads QRQAAVLVPI…QVTPVVGIIP (92 aa). The Nudix box signature appears at 67-89; that stretch reads GAVDNSDATLIAAALREAQEEVA. Positions 83 and 87 each coordinate Mg(2+).

It belongs to the Nudix hydrolase family. PCD1 subfamily. The cofactor is Mn(2+). Mg(2+) is required as a cofactor.

Functionally, probably mediates the hydrolysis of some nucleoside diphosphate derivatives. This is an uncharacterized protein from Klebsiella aerogenes (Enterobacter aerogenes).